The sequence spans 78 residues: Sec-independent protein translocase protein TatA (78 aa).

The chain crosses the membrane as a helical span at residues 4–21; it reads SFQHILILLVVVLLLFGR. Residues 49–78 form a disordered region; sequence TAKSDSIKTIDNTGKPTNVQANPQRQDSTV. Positions 57 to 78 are enriched in polar residues; the sequence is TIDNTGKPTNVQANPQRQDSTV.

This sequence belongs to the TatA/E family. The Tat system comprises two distinct complexes: a TatABC complex, containing multiple copies of TatA, TatB and TatC subunits, and a separate TatA complex, containing only TatA subunits. Substrates initially bind to the TatABC complex, which probably triggers association of the separate TatA complex to form the active translocon.

Its subcellular location is the cell inner membrane. Its function is as follows. Part of the twin-arginine translocation (Tat) system that transports large folded proteins containing a characteristic twin-arginine motif in their signal peptide across membranes. TatA could form the protein-conducting channel of the Tat system. This chain is Sec-independent protein translocase protein TatA, found in Afipia carboxidovorans (strain ATCC 49405 / DSM 1227 / KCTC 32145 / OM5) (Oligotropha carboxidovorans).